The following is a 371-amino-acid chain: E3 ubiquitin-protein ligase RHF1A (371 aa).

The segment at 46–87 (CSICLEPFTLQDPSTVTSCKHEYHLQCIIEWSQRSKECPICW) adopts an RING-type; atypical zinc-finger fold. 2 disordered regions span residues 199 to 254 (HQNS…SSLP) and 348 to 371 (EANS…GETC). The span at 200-225 (QNSNPCPSPGSMTPSPVSGHSSIPAD) shows a compositional bias: polar residues. A compositionally biased stretch (low complexity) spans 226–252 (SNNGSRISPGPSPSRSSQSPKSPEASS).

In terms of assembly, interacts with KRP6. In terms of tissue distribution, expressed in stems, flowers, green siliques, cauline leaves, seeds and roots.

It catalyses the reaction S-ubiquitinyl-[E2 ubiquitin-conjugating enzyme]-L-cysteine + [acceptor protein]-L-lysine = [E2 ubiquitin-conjugating enzyme]-L-cysteine + N(6)-ubiquitinyl-[acceptor protein]-L-lysine.. It participates in protein modification; protein ubiquitination. Its function is as follows. E3 ubiquitin-protein ligase involved in the positive regulation of the gametogenesis progression. Mediates the proteasomal degradation of KRP6, a cyclin-dependent kinase inhibitor which accumulates during meiosis and blocks the progression of subsequent mitoses during gametophyte development. Functions in association with RHF2A. Possesses E3 ubiquitin-protein ligase activity when associated with the E2 enzyme UBC8 in vitro. This chain is E3 ubiquitin-protein ligase RHF1A, found in Arabidopsis thaliana (Mouse-ear cress).